The chain runs to 713 residues: Forkhead box protein P2 (713 aa).

Polar residues predominate over residues 1–28 (MMQESATETISNSSMNQNGMSTLSSQLD). Disordered regions lie at residues 1–44 (MMQE…SSEV) and 283–337 (KHGG…TGAS). Residues 290–303 (TTNNSSSTTSSTTS) are compositionally biased toward low complexity. Residues 313 to 322 (SIVNGQSSVL) show a composition bias toward polar residues. Positions 324 to 335 (ARRDSSSHEETG) are enriched in basic and acidic residues. A C2H2-type zinc finger spans residues 344 to 369 (GVCKWPGCESICEDFGQFLKHLNNEH). A leucine-zipper region spans residues 386–407 (VQQLEIQLSKERERLQAMMTHL). A CTBP1-binding region spans residues 420–424 (PLNLV). The segment covering 436 to 457 (TSPQSLPQTPTTPTAPVTPITQ) has biased composition (low complexity). Positions 436–463 (TSPQSLPQTPTTPTAPVTPITQGPSVIT) are disordered. Positions 502–592 (RPPFTYATLI…SQKITGSPTL (91 aa)) form a DNA-binding region, fork-head. 2 disordered regions span residues 647 to 666 (LDHI…QPHI) and 676 to 713 (VIAE…EDLE). Positions 697-713 (LEDDREIEEEPLSEDLE) are enriched in acidic residues.

Forms homodimers and heterodimers with FOXP1 and FOXP4. Dimerization is required for DNA-binding. Interacts with CTBP1. Interacts with FOXP1. Interacts with TBR1. Interacts with ZMYM2.

Its subcellular location is the nucleus. Transcriptional repressor that may play a role in the specification and differentiation of lung epithelium. May also play a role in developing neural, gastrointestinal and cardiovascular tissues. Can act with CTBP1 to synergistically repress transcription but CTPBP1 is not essential. Plays a role in synapse formation by regulating SRPX2 levels. This Gorilla gorilla gorilla (Western lowland gorilla) protein is Forkhead box protein P2 (FOXP2).